We begin with the raw amino-acid sequence, 675 residues long: Heat shock 70 kDa protein 12A (675 aa).

Positions 1 to 13 are enriched in basic and acidic residues; it reads MADKEAGGSDGPR. The tract at residues 1 to 45 is disordered; it reads MADKEAGGSDGPRETAPTSAYSSPARSLGDTGITPLSPSHIVNDT. Alanine 2 carries the post-translational modification N-acetylalanine. 2 stretches are compositionally biased toward polar residues: residues 16–25 and 34–45; these read APTSAYSSPA and TPLSPSHIVNDT.

The protein belongs to the heat shock protein 70 family. Interacts with SORL1 (via cytosolic C-terminus); this interaction affects SORL1 internalization and subcellular localization. In terms of tissue distribution, widely expressed with highest levels in brain, kidney and muscle.

It localises to the cytoplasm. The protein localises to the nucleus. In terms of biological role, adapter protein for SORL1, but not SORT1. Delays SORL1 internalization and affects SORL1 subcellular localization. This Homo sapiens (Human) protein is Heat shock 70 kDa protein 12A (HSPA12A).